The following is a 313-amino-acid chain: N-acetyl-gamma-glutamyl-phosphate reductase (313 aa).

C117 is an active-site residue.

This sequence belongs to the NAGSA dehydrogenase family. Type 2 subfamily.

It localises to the cytoplasm. The enzyme catalyses N-acetyl-L-glutamate 5-semialdehyde + phosphate + NADP(+) = N-acetyl-L-glutamyl 5-phosphate + NADPH + H(+). It functions in the pathway amino-acid biosynthesis; L-arginine biosynthesis; N(2)-acetyl-L-ornithine from L-glutamate: step 3/4. In terms of biological role, catalyzes the NADPH-dependent reduction of N-acetyl-5-glutamyl phosphate to yield N-acetyl-L-glutamate 5-semialdehyde. The protein is N-acetyl-gamma-glutamyl-phosphate reductase of Burkholderia cenocepacia (strain ATCC BAA-245 / DSM 16553 / LMG 16656 / NCTC 13227 / J2315 / CF5610) (Burkholderia cepacia (strain J2315)).